We begin with the raw amino-acid sequence, 84 residues long: RNA-binding protein Hfq (84 aa).

Residues 9-68 form the Sm domain; that stretch reads DPYLNTLRKERVPVSIYLVNGIKLQGQIESFDQFVILLKNTVSQMVYKHAISTVVPSRPV.

Belongs to the Hfq family. Homohexamer.

Functionally, RNA chaperone that binds small regulatory RNA (sRNAs) and mRNAs to facilitate mRNA translational regulation in response to envelope stress, environmental stress and changes in metabolite concentrations. Also binds with high specificity to tRNAs. The chain is RNA-binding protein Hfq from Azotobacter vinelandii (strain DJ / ATCC BAA-1303).